We begin with the raw amino-acid sequence, 121 residues long: Ribonuclease P protein component (121 aa).

The protein belongs to the RnpA family. As to quaternary structure, consists of a catalytic RNA component (M1 or rnpB) and a protein subunit.

The catalysed reaction is Endonucleolytic cleavage of RNA, removing 5'-extranucleotides from tRNA precursor.. Functionally, RNaseP catalyzes the removal of the 5'-leader sequence from pre-tRNA to produce the mature 5'-terminus. It can also cleave other RNA substrates such as 4.5S RNA. The protein component plays an auxiliary but essential role in vivo by binding to the 5'-leader sequence and broadening the substrate specificity of the ribozyme. The polypeptide is Ribonuclease P protein component (Alcanivorax borkumensis (strain ATCC 700651 / DSM 11573 / NCIMB 13689 / SK2)).